A 171-amino-acid polypeptide reads, in one-letter code: L-methionine sulfoximine/L-methionine sulfone acetyltransferase (171 aa).

Residues 1 to 163 enclose the N-acetyltransferase domain; it reads MTIRFADKAD…DLTFMQLQLD (163 aa). Substrate-binding positions include 72 to 74 and 82 to 84; these read RSF and EHS. Residues 85-87, 93-98, Asn124, and Ser133 each bind acetyl-CoA; these read VYV and GKGLGR.

Homodimer.

The enzyme catalyses L-methionine sulfoximine + acetyl-CoA = N-acetyl-L-methionine sulfoximine + CoA + H(+). It carries out the reaction L-methionine sulfone + acetyl-CoA = N-acetyl-L-methionine sulfone + CoA + H(+). Its function is as follows. Plays a role in the resistance against the toxic effects of L-methionine sulfoximine (MSX), a rare amino acid which inhibits glutamine synthetase (GlnA). Catalyzes the acetylation of MSX. It can also use L-methionine sulfone (MSO). Also catalyzes the acylation of free L-amino acids using an acyl-CoA as acyl donor. The protein is L-methionine sulfoximine/L-methionine sulfone acetyltransferase (yncA) of Salmonella typhimurium (strain LT2 / SGSC1412 / ATCC 700720).